A 417-amino-acid polypeptide reads, in one-letter code: Serine hydroxymethyltransferase (417 aa).

Residues Leu121 and 125 to 127 contribute to the (6S)-5,6,7,8-tetrahydrofolate site; that span reads GHL. Lys229 bears the N6-(pyridoxal phosphate)lysine mark. Residue 355–357 participates in (6S)-5,6,7,8-tetrahydrofolate binding; it reads SPF.

This sequence belongs to the SHMT family. As to quaternary structure, homodimer. Pyridoxal 5'-phosphate serves as cofactor.

It localises to the cytoplasm. It catalyses the reaction (6R)-5,10-methylene-5,6,7,8-tetrahydrofolate + glycine + H2O = (6S)-5,6,7,8-tetrahydrofolate + L-serine. The protein operates within one-carbon metabolism; tetrahydrofolate interconversion. Its pathway is amino-acid biosynthesis; glycine biosynthesis; glycine from L-serine: step 1/1. Functionally, catalyzes the reversible interconversion of serine and glycine with tetrahydrofolate (THF) serving as the one-carbon carrier. This reaction serves as the major source of one-carbon groups required for the biosynthesis of purines, thymidylate, methionine, and other important biomolecules. Also exhibits THF-independent aldolase activity toward beta-hydroxyamino acids, producing glycine and aldehydes, via a retro-aldol mechanism. This chain is Serine hydroxymethyltransferase, found in Shewanella baltica (strain OS223).